Reading from the N-terminus, the 246-residue chain is tRNA1(Val) (adenine(37)-N6)-methyltransferase (246 aa).

This sequence belongs to the methyltransferase superfamily. tRNA (adenine-N(6)-)-methyltransferase family.

The protein resides in the cytoplasm. The enzyme catalyses adenosine(37) in tRNA1(Val) + S-adenosyl-L-methionine = N(6)-methyladenosine(37) in tRNA1(Val) + S-adenosyl-L-homocysteine + H(+). Specifically methylates the adenine in position 37 of tRNA(1)(Val) (anticodon cmo5UAC). This chain is tRNA1(Val) (adenine(37)-N6)-methyltransferase, found in Shewanella halifaxensis (strain HAW-EB4).